The following is a 423-amino-acid chain: Gamma-glutamyl phosphate reductase 2 (423 aa).

It belongs to the gamma-glutamyl phosphate reductase family.

The protein localises to the cytoplasm. It carries out the reaction L-glutamate 5-semialdehyde + phosphate + NADP(+) = L-glutamyl 5-phosphate + NADPH + H(+). It functions in the pathway amino-acid biosynthesis; L-proline biosynthesis; L-glutamate 5-semialdehyde from L-glutamate: step 2/2. In terms of biological role, catalyzes the NADPH-dependent reduction of L-glutamate 5-phosphate into L-glutamate 5-semialdehyde and phosphate. The product spontaneously undergoes cyclization to form 1-pyrroline-5-carboxylate. This is Gamma-glutamyl phosphate reductase 2 from Bacillus licheniformis (strain ATCC 14580 / DSM 13 / JCM 2505 / CCUG 7422 / NBRC 12200 / NCIMB 9375 / NCTC 10341 / NRRL NRS-1264 / Gibson 46).